Consider the following 186-residue polypeptide: Ribosome-recycling factor (186 aa).

The protein belongs to the RRF family.

It localises to the cytoplasm. Functionally, responsible for the release of ribosomes from messenger RNA at the termination of protein biosynthesis. May increase the efficiency of translation by recycling ribosomes from one round of translation to another. The sequence is that of Ribosome-recycling factor from Burkholderia ambifaria (strain ATCC BAA-244 / DSM 16087 / CCUG 44356 / LMG 19182 / AMMD) (Burkholderia cepacia (strain AMMD)).